The primary structure comprises 80 residues: uncharacterized protein (80 aa).

4Fe-4S ferredoxin-type domains lie at 21 to 49 (KIIEIDYNKCKNCLSCYRVCKNNVFAIKN) and 50 to 80 (NRVVVKNENNCTKCGECLKVCRYGAIILYDA). Positions 30, 33, 36, 40, 60, 63, 66, and 70 each coordinate [4Fe-4S] cluster.

Requires [4Fe-4S] cluster as cofactor.

This is an uncharacterized protein from Methanocaldococcus jannaschii (strain ATCC 43067 / DSM 2661 / JAL-1 / JCM 10045 / NBRC 100440) (Methanococcus jannaschii).